A 400-amino-acid chain; its full sequence is Enoyl-[acyl-carrier-protein] reductase [NADH] (400 aa).

NAD(+) is bound by residues 48-53 (GASTGY), 74-75 (FE), 111-112 (DA), and 139-140 (LA). Tyrosine 225 serves as a coordination point for substrate. Catalysis depends on tyrosine 235, which acts as the Proton donor. Residues lysine 244 and 273–275 (VVT) each bind NAD(+).

It belongs to the TER reductase family. Monomer.

It carries out the reaction a 2,3-saturated acyl-[ACP] + NAD(+) = a (2E)-enoyl-[ACP] + NADH + H(+). Its pathway is lipid metabolism; fatty acid biosynthesis. In terms of biological role, involved in the final reduction of the elongation cycle of fatty acid synthesis (FAS II). Catalyzes the reduction of a carbon-carbon double bond in an enoyl moiety that is covalently linked to an acyl carrier protein (ACP). This is Enoyl-[acyl-carrier-protein] reductase [NADH] from Burkholderia vietnamiensis (strain G4 / LMG 22486) (Burkholderia cepacia (strain R1808)).